The primary structure comprises 800 residues: Phenylalanine--tRNA ligase beta subunit (800 aa).

Positions 39 to 147 constitute a tRNA-binding domain; sequence FDAIADIVVG…QDSVPGVRLV (109 aa). One can recognise a B5 domain in the interval 401–477; the sequence is WQAAQLRFRP…RVYGMDNIPP (77 aa). Positions 455, 461, 464, and 465 each coordinate Mg(2+). An FDX-ACB domain is found at 706 to 800; the sequence is PVFPPVKRDI…SLTEALGVRI (95 aa).

This sequence belongs to the phenylalanyl-tRNA synthetase beta subunit family. Type 1 subfamily. Tetramer of two alpha and two beta subunits. Requires Mg(2+) as cofactor.

The protein resides in the cytoplasm. It carries out the reaction tRNA(Phe) + L-phenylalanine + ATP = L-phenylalanyl-tRNA(Phe) + AMP + diphosphate + H(+). The protein is Phenylalanine--tRNA ligase beta subunit of Oleidesulfovibrio alaskensis (strain ATCC BAA-1058 / DSM 17464 / G20) (Desulfovibrio alaskensis).